Consider the following 154-residue polypeptide: Interleukin-7 (154 aa).

An N-terminal signal peptide occupies residues 1–25 (MFHVSFRYIFGIPPLILVLLPVTSS). Cystine bridges form between C27/C145, C58/C133, and C71/C116. 2 N-linked (GlcNAc...) asparagine glycosylation sites follow: N94 and N115.

This sequence belongs to the IL-7/IL-9 family. Interacts with IL7R and CSF2RG. In terms of processing, three disulfide bonds are present.

The protein localises to the secreted. In terms of biological role, hematopoietic cytokine that plays an essential role in the development, expansion, and survival of naive and memory T-cells and B-cells thereby regulating the number of mature lymphocytes and maintaining lymphoid homeostasis. Mechanistically, exerts its biological effects through a receptor composed of IL7RA subunit and the cytokine receptor common subunit gamma/CSF2RG. Binding to the receptor leads to activation of various kinases including JAK1 or JAK3 depending on the cell type and subsequently propagation of signals through activation of several downstream signaling pathways including the PI3K/Akt/mTOR or the JAK-STAT5. The polypeptide is Interleukin-7 (Il7) (Rattus norvegicus (Rat)).